The chain runs to 348 residues: Oxygen-dependent coproporphyrinogen-III oxidase (348 aa).

Position 104 (Ser104) interacts with substrate. Residues His108 and His118 each contribute to the a divalent metal cation site. Catalysis depends on His118, which acts as the Proton donor. A substrate-binding site is contributed by 120–122 (NYR). Residues His152 and His182 each contribute to the a divalent metal cation site. The interval 272-307 (YAEFNLVWDRGTIFGLQTNGRTESILMSLPPLARWE) is important for dimerization.

The protein belongs to the aerobic coproporphyrinogen-III oxidase family. Homodimer. A divalent metal cation serves as cofactor.

It is found in the cytoplasm. It catalyses the reaction coproporphyrinogen III + O2 + 2 H(+) = protoporphyrinogen IX + 2 CO2 + 2 H2O. It participates in porphyrin-containing compound metabolism; protoporphyrin-IX biosynthesis; protoporphyrinogen-IX from coproporphyrinogen-III (O2 route): step 1/1. Involved in the heme and chlorophyll biosynthesis. Catalyzes the aerobic oxidative decarboxylation of propionate groups of rings A and B of coproporphyrinogen-III to yield the vinyl groups in protoporphyrinogen-IX. The polypeptide is Oxygen-dependent coproporphyrinogen-III oxidase (Prochlorococcus marinus (strain NATL2A)).